The following is a 242-amino-acid chain: Synaptonemal complex central element protein 1-like (242 aa).

Positions 1–24 are disordered; it reads MAGKLKPLNVEAPEATEEAEGQAK. Positions 44-181 form a coiled coil; that stretch reads LEPQIEDLIS…LREVERRLHS (138 aa). The interval 206–242 is disordered; it reads VRSAPEVGAGEGEAGPELPRARDEEDPEPPVAAPDAL.

It belongs to the SYCE family.

May be involved in meiosis. The chain is Synaptonemal complex central element protein 1-like (SYCE1L) from Homo sapiens (Human).